A 466-amino-acid polypeptide reads, in one-letter code: Argininosuccinate lyase 1 (466 aa).

The protein belongs to the lyase 1 family. Argininosuccinate lyase subfamily.

The protein resides in the cytoplasm. It carries out the reaction 2-(N(omega)-L-arginino)succinate = fumarate + L-arginine. It participates in amino-acid biosynthesis; L-arginine biosynthesis; L-arginine from L-ornithine and carbamoyl phosphate: step 3/3. This Mesorhizobium japonicum (strain LMG 29417 / CECT 9101 / MAFF 303099) (Mesorhizobium loti (strain MAFF 303099)) protein is Argininosuccinate lyase 1.